Here is a 593-residue protein sequence, read N- to C-terminus: V-type ATP synthase alpha chain (593 aa).

An ATP-binding site is contributed by 246 to 253 (GPFGAGKT).

The protein belongs to the ATPase alpha/beta chains family.

It carries out the reaction ATP + H2O + 4 H(+)(in) = ADP + phosphate + 5 H(+)(out). Produces ATP from ADP in the presence of a proton gradient across the membrane. The V-type alpha chain is a catalytic subunit. The sequence is that of V-type ATP synthase alpha chain from Protochlamydia amoebophila (strain UWE25).